The following is an 876-amino-acid chain: Alanine--tRNA ligase (876 aa).

Lys74 is subject to N6-acetyllysine. Zn(2+) is bound by residues His564, His568, Cys666, and His670.

The protein belongs to the class-II aminoacyl-tRNA synthetase family. As to quaternary structure, homotetramer. Zn(2+) serves as cofactor.

Its subcellular location is the cytoplasm. The catalysed reaction is tRNA(Ala) + L-alanine + ATP = L-alanyl-tRNA(Ala) + AMP + diphosphate. Catalyzes the attachment of alanine to tRNA(Ala) in a two-step reaction: alanine is first activated by ATP to form Ala-AMP and then transferred to the acceptor end of tRNA(Ala). Also edits incorrectly charged Ser-tRNA(Ala) and Gly-tRNA(Ala) via its editing domain. The sequence is that of Alanine--tRNA ligase from Shigella boydii serotype 18 (strain CDC 3083-94 / BS512).